The following is a 159-amino-acid chain: SsrA-binding protein (159 aa).

Residues 137–159 (DKRETEKQRDWSREKGRLLKERG) are disordered.

The protein belongs to the SmpB family.

It localises to the cytoplasm. Its function is as follows. Required for rescue of stalled ribosomes mediated by trans-translation. Binds to transfer-messenger RNA (tmRNA), required for stable association of tmRNA with ribosomes. tmRNA and SmpB together mimic tRNA shape, replacing the anticodon stem-loop with SmpB. tmRNA is encoded by the ssrA gene; the 2 termini fold to resemble tRNA(Ala) and it encodes a 'tag peptide', a short internal open reading frame. During trans-translation Ala-aminoacylated tmRNA acts like a tRNA, entering the A-site of stalled ribosomes, displacing the stalled mRNA. The ribosome then switches to translate the ORF on the tmRNA; the nascent peptide is terminated with the 'tag peptide' encoded by the tmRNA and targeted for degradation. The ribosome is freed to recommence translation, which seems to be the essential function of trans-translation. The protein is SsrA-binding protein of Mesorhizobium japonicum (strain LMG 29417 / CECT 9101 / MAFF 303099) (Mesorhizobium loti (strain MAFF 303099)).